Here is a 337-residue protein sequence, read N- to C-terminus: Formamidase (337 aa).

Residues 14–257 form the CN hydrolase domain; sequence VVIGLVQLQL…DEIITAEVRP (244 aa). Glu60 functions as the Proton acceptor in the catalytic mechanism. Residue Lys129 is the Proton donor of the active site. The Nucleophile role is filled by Cys162.

Belongs to the carbon-nitrogen hydrolase superfamily. Aliphatic amidase family.

It carries out the reaction formamide + H2O = formate + NH4(+). Its function is as follows. Is an aliphatic amidase with a restricted substrate specificity, as it only hydrolyzes formamide. The polypeptide is Formamidase (Bradyrhizobium sp. (strain ORS 278)).